The following is a 238-amino-acid chain: MQFDPPLQPAILLKRYKRFLADVITPDGRELTLHCPNTGAMTGCAAPGDTVWYSTSDNAKRKYAHTWELTETQQGAVICVNTLRANSLAKEAISSGIIPELSGYNQLKSEVKYGEENSRIDIMLQADDRQNCYIEVKSVTLAEKEYGYFPDAVTTRGQKHLRELMAVAANGDRAVILFAVLHSAIDRFSPAHHIDARYAQLLTEARDKGVEILAWKAELSTTKMTLNKPIAVVLNPGK.

It belongs to the SfsA family.

The protein is Sugar fermentation stimulation protein homolog of Klebsiella pneumoniae (strain 342).